We begin with the raw amino-acid sequence, 170 residues long: UPF0316 protein CLJ_B0679 (170 aa).

The next 2 membrane-spanning stretches (helical) occupy residues M1–I21 and I36–I56.

Belongs to the UPF0316 family.

Its subcellular location is the cell membrane. This is UPF0316 protein CLJ_B0679 from Clostridium botulinum (strain 657 / Type Ba4).